Consider the following 760-residue polypeptide: MATTTHILGYPRIGEKRELKFAQEKYWRGDIDQTELKKVGADLRAKNWQTQTEAGLSFTTAGDFAWYDHVLTTTLLLGHVPKRHAGGFPNLDTLFKVGRGQSQAGCGCAGAAASDMTKWFNTNYHYIVPEFSKDDTFEVSWPQLFEEINEAVQAGHKVKPVLLGPVSYLYLGKEVEEGFDRLTLLPRLLTAYQAILAKLASQGVEWVQIDEPILSLELEKQWADAFKLAYQLIRSDVKVLLTTYFDSVTDTLDKIVELPVDGLHVDLSAAPQQLDDVVAKLPEGWVLSAGVVNGRNVWRSDLSAQLERLQPVKEKLGDKLWVASSCSLLHSPVDLELETELSEEVKSWFAFAKQKVTEVALLGRALDGDQNAILACDTYSQPIKARKTATHVNKPQVQVRLNNITASLAERSAPYAERAAHQAEVLGLPLLPTTTIGSFPQTGEIRVQRSAYRTGQLSESDYIQALKGHIADAVKRQEALDLDVLVHGEAERNDMVEYFAENLAGFQTTKFGWVQSYGSRCVKPAIVVADIEREKPITVEWSTYAQSLTSKQMKGMLTGPVTILCWTFPREDITRQEIAQQLALALRDEVSDLQDAGINIIQIDEPAIREGLPLKKRDHKAYLEWAVNAFKISAASAKPETQIHTHMCYSEFNEIIDSVAALDADVITIETSRSNMELLKAFEEFNYPNEIGPGVYDIHSPNIPTEEWIEGLIKKAAEKIPVQRLWVNPDCGLKTRNWAETEAALANLVSAAKKLRAELA.

Residues arginine 17–lysine 20 and lysine 118 contribute to the 5-methyltetrahydropteroyltri-L-glutamate site. L-homocysteine contacts are provided by residues isoleucine 436–serine 438 and glutamate 489. Residues isoleucine 436–serine 438 and glutamate 489 each bind L-methionine. 5-methyltetrahydropteroyltri-L-glutamate-binding positions include arginine 520–cysteine 521 and tryptophan 566. Aspartate 604 is an L-homocysteine binding site. Aspartate 604 contributes to the L-methionine binding site. Glutamate 610 contributes to the 5-methyltetrahydropteroyltri-L-glutamate binding site. Zn(2+) contacts are provided by histidine 646, cysteine 648, and glutamate 670. Histidine 699 serves as the catalytic Proton donor. A Zn(2+)-binding site is contributed by cysteine 731.

Belongs to the vitamin-B12 independent methionine synthase family. Requires Zn(2+) as cofactor.

It carries out the reaction 5-methyltetrahydropteroyltri-L-glutamate + L-homocysteine = tetrahydropteroyltri-L-glutamate + L-methionine. Its pathway is amino-acid biosynthesis; L-methionine biosynthesis via de novo pathway; L-methionine from L-homocysteine (MetE route): step 1/1. Functionally, catalyzes the transfer of a methyl group from 5-methyltetrahydrofolate to homocysteine resulting in methionine formation. The polypeptide is 5-methyltetrahydropteroyltriglutamate--homocysteine methyltransferase (Vibrio parahaemolyticus serotype O3:K6 (strain RIMD 2210633)).